We begin with the raw amino-acid sequence, 1090 residues long: Protein transport protein Sec24A (1090 aa).

2 disordered regions span residues 1–260 (MAQP…AHNT) and 272–325 (TPQL…TQTP). Positions 8–28 (AARGAAASLQAQNGAASASGS) are enriched in low complexity. Composition is skewed to polar residues over residues 29–55 (PYTN…SQPP), 138–151 (WQYN…QTNH), and 162–184 (GNPN…QTSF). Residues 194–236 (QNPPLPPTFQPGAPPGPPPAGGPPPSRGPAPQKTPPRAAPPPS) show a composition bias toward pro residues. Polar residues-rich tracts occupy residues 237–258 (FNSA…TAAH), 274–286 (QLVN…SRSV), and 313–325 (SYPS…TQTP). Residues C428, C431, C449, and C452 each contribute to the Zn(2+) site. A zinc finger-like region spans residues 428-452 (CRSCRTYINPFVNFLDQRRWKCNLC). Residues 963–1036 (PQPPILQLSV…PESARIAAFI (74 aa)) form a Gelsolin-like repeat.

The protein belongs to the SEC23/SEC24 family. SEC24 subfamily. In terms of assembly, COPII is composed of at least five proteins: the Sec23/24 complex, the Sec13/31 complex and Sar1. Interacts with TMED2. Interacts (as part of the Sec23/24 complex) with SEC22B; recruits SEC22B into COPII-coated vesicles for its transport from the endoplasmic reticulum to the Golgi. Interacts with STING1; promoting STING1 translocation to COPII vesicles in a STEEP1-dependent manner. Interacts with TMEM39A. Interacts with SACM1L; this interaction is reduced in the absence of TMEM39A. Interacts with kinase FAM20C; transport of FAM20C from the endoplasmic reticulum to the Golgi is likely to be mediated by COPII vesicles.

The protein resides in the cytoplasmic vesicle. It is found in the COPII-coated vesicle membrane. Its subcellular location is the endoplasmic reticulum membrane. The protein localises to the cytoplasm. It localises to the cytosol. Its function is as follows. Component of the coat protein complex II (COPII) which promotes the formation of transport vesicles from the endoplasmic reticulum (ER). The coat has two main functions, the physical deformation of the endoplasmic reticulum membrane into vesicles and the selection of cargo molecules for their transport to the Golgi complex. Plays a central role in cargo selection within the COPII complex and together with SEC24B may have a different specificity compared to SEC24C and SEC24D. May package preferentially cargos with cytoplasmic DxE or LxxLE motifs and may also recognize conformational epitopes. The protein is Protein transport protein Sec24A of Mus musculus (Mouse).